A 550-amino-acid polypeptide reads, in one-letter code: Methionine--tRNA ligase (550 aa).

A 'HIGH' region motif is present at residues 13–23 (PYANGPLHFGH). The Zn(2+) site is built by cysteine 145, cysteine 148, cysteine 158, and cysteine 161. The short motif at 331–335 (QFSKS) is the 'KMSKS' region element. Lysine 334 contributes to the ATP binding site.

This sequence belongs to the class-I aminoacyl-tRNA synthetase family. MetG type 1 subfamily. As to quaternary structure, monomer. Zn(2+) serves as cofactor.

The protein resides in the cytoplasm. The catalysed reaction is tRNA(Met) + L-methionine + ATP = L-methionyl-tRNA(Met) + AMP + diphosphate. Functionally, is required not only for elongation of protein synthesis but also for the initiation of all mRNA translation through initiator tRNA(fMet) aminoacylation. This Chlamydia muridarum (strain MoPn / Nigg) protein is Methionine--tRNA ligase (metG).